Here is a 340-residue protein sequence, read N- to C-terminus: DNA-directed RNA polymerase subunit alpha (340 aa).

Residues 1–233 (MIQDEIPIPV…DLFIIFLNME (233 aa)) form an alpha N-terminal domain (alpha-NTD) region. The alpha C-terminal domain (alpha-CTD) stretch occupies residues 264–340 (AKEVAFKQIF…QLPKDQFNIS (77 aa)).

Belongs to the RNA polymerase alpha chain family. As to quaternary structure, in plastids the minimal PEP RNA polymerase catalytic core is composed of four subunits: alpha, beta, beta', and beta''. When a (nuclear-encoded) sigma factor is associated with the core the holoenzyme is formed, which can initiate transcription.

The protein resides in the plastid. The protein localises to the chloroplast. It carries out the reaction RNA(n) + a ribonucleoside 5'-triphosphate = RNA(n+1) + diphosphate. In terms of biological role, DNA-dependent RNA polymerase catalyzes the transcription of DNA into RNA using the four ribonucleoside triphosphates as substrates. The chain is DNA-directed RNA polymerase subunit alpha from Psilotum nudum (Whisk fern).